The chain runs to 504 residues: Probable cytosol aminopeptidase (504 aa).

Residues K272 and D277 each coordinate Mn(2+). Residue K284 is part of the active site. Mn(2+) contacts are provided by D295, D354, and E356. Residue R358 is part of the active site.

This sequence belongs to the peptidase M17 family. Requires Mn(2+) as cofactor.

It localises to the cytoplasm. It catalyses the reaction Release of an N-terminal amino acid, Xaa-|-Yaa-, in which Xaa is preferably Leu, but may be other amino acids including Pro although not Arg or Lys, and Yaa may be Pro. Amino acid amides and methyl esters are also readily hydrolyzed, but rates on arylamides are exceedingly low.. It carries out the reaction Release of an N-terminal amino acid, preferentially leucine, but not glutamic or aspartic acids.. Functionally, presumably involved in the processing and regular turnover of intracellular proteins. Catalyzes the removal of unsubstituted N-terminal amino acids from various peptides. The sequence is that of Probable cytosol aminopeptidase from Chlorobaculum tepidum (strain ATCC 49652 / DSM 12025 / NBRC 103806 / TLS) (Chlorobium tepidum).